The primary structure comprises 121 residues: Large ribosomal subunit protein bL12 (121 aa).

Belongs to the bacterial ribosomal protein bL12 family. Homodimer. Part of the ribosomal stalk of the 50S ribosomal subunit. Forms a multimeric L10(L12)X complex, where L10 forms an elongated spine to which 2 to 4 L12 dimers bind in a sequential fashion. Binds GTP-bound translation factors.

Functionally, forms part of the ribosomal stalk which helps the ribosome interact with GTP-bound translation factors. Is thus essential for accurate translation. The chain is Large ribosomal subunit protein bL12 from Streptococcus equi subsp. equi (strain 4047).